We begin with the raw amino-acid sequence, 201 residues long: LexA repressor (201 aa).

Residues 27 to 47 (RMEISSAFGFASPNAAEDHLK) constitute a DNA-binding region (H-T-H motif). Active-site for autocatalytic cleavage activity residues include Ser-116 and Lys-153.

This sequence belongs to the peptidase S24 family. As to quaternary structure, homodimer.

The enzyme catalyses Hydrolysis of Ala-|-Gly bond in repressor LexA.. In terms of biological role, represses a number of genes involved in the response to DNA damage (SOS response), including recA and lexA. In the presence of single-stranded DNA, RecA interacts with LexA causing an autocatalytic cleavage which disrupts the DNA-binding part of LexA, leading to derepression of the SOS regulon and eventually DNA repair. This is LexA repressor from Dechloromonas aromatica (strain RCB).